The following is a 930-amino-acid chain: Dual serine/threonine and tyrosine protein kinase (930 aa).

The stretch at 383 to 428 (RKENELYESLMNIANRKQEEMKDMIIETLSNMKEELLEDAANMEFK) forms a coiled coil. A Protein kinase domain is found at 653–907 (PKLGRELGRG…PLLGIVQPML (255 aa)). Residues 659-667 (LGRGQYGVV) and lysine 682 contribute to the ATP site. Aspartate 778 functions as the Proton acceptor in the catalytic mechanism.

The protein belongs to the protein kinase superfamily. Ser/Thr protein kinase family. Widely expressed with the highest expression in brain and ovary.

The protein localises to the cytoplasm. The protein resides in the cell membrane. Its subcellular location is the apical cell membrane. It is found in the basolateral cell membrane. It localises to the cell junction. The enzyme catalyses L-seryl-[protein] + ATP = O-phospho-L-seryl-[protein] + ADP + H(+). It carries out the reaction L-threonyl-[protein] + ATP = O-phospho-L-threonyl-[protein] + ADP + H(+). The catalysed reaction is L-tyrosyl-[protein] + ATP = O-phospho-L-tyrosyl-[protein] + ADP + H(+). Its function is as follows. May act as a positive regulator of ERK phosphorylation downstream of fibroblast growth factor-receptor activation. May induce both caspase-dependent apoptosis and caspase-independent cell death. This Gallus gallus (Chicken) protein is Dual serine/threonine and tyrosine protein kinase (DSTYK).